A 337-amino-acid polypeptide reads, in one-letter code: Ornithine carbamoyltransferase, catabolic (337 aa).

Carbamoyl phosphate contacts are provided by residues 58–61 (STRT), Q85, R109, and 135–138 (HPTQ). Residues N167, D231, and 235–236 (SM) contribute to the L-ornithine site. Residues 272 to 273 (CL) and R317 each bind carbamoyl phosphate.

This sequence belongs to the aspartate/ornithine carbamoyltransferase superfamily. OTCase family.

The protein localises to the cytoplasm. The enzyme catalyses carbamoyl phosphate + L-ornithine = L-citrulline + phosphate + H(+). It functions in the pathway amino-acid degradation; L-arginine degradation via ADI pathway; carbamoyl phosphate from L-arginine: step 2/2. Reversibly catalyzes the transfer of the carbamoyl group from carbamoyl phosphate (CP) to the N(epsilon) atom of ornithine (ORN) to produce L-citrulline. The polypeptide is Ornithine carbamoyltransferase, catabolic (arcB) (Latilactobacillus sakei (Lactobacillus sakei)).